The sequence spans 381 residues: Erythronate-4-phosphate dehydrogenase (381 aa).

Substrate is bound by residues serine 45 and threonine 66. NAD(+)-binding positions include aspartate 146, threonine 174, 205 to 207 (ASR), and aspartate 231. The active site involves arginine 207. Residue glutamate 236 is part of the active site. Residue histidine 253 is the Proton donor of the active site. Glycine 256 lines the NAD(+) pocket. Substrate is bound at residue tyrosine 257.

It belongs to the D-isomer specific 2-hydroxyacid dehydrogenase family. PdxB subfamily. Homodimer.

It localises to the cytoplasm. The catalysed reaction is 4-phospho-D-erythronate + NAD(+) = (R)-3-hydroxy-2-oxo-4-phosphooxybutanoate + NADH + H(+). The protein operates within cofactor biosynthesis; pyridoxine 5'-phosphate biosynthesis; pyridoxine 5'-phosphate from D-erythrose 4-phosphate: step 2/5. Catalyzes the oxidation of erythronate-4-phosphate to 3-hydroxy-2-oxo-4-phosphonooxybutanoate. The chain is Erythronate-4-phosphate dehydrogenase from Stutzerimonas stutzeri (strain A1501) (Pseudomonas stutzeri).